A 467-amino-acid polypeptide reads, in one-letter code: Asparagine--tRNA ligase (467 aa).

The protein belongs to the class-II aminoacyl-tRNA synthetase family. In terms of assembly, homodimer.

The protein resides in the cytoplasm. It catalyses the reaction tRNA(Asn) + L-asparagine + ATP = L-asparaginyl-tRNA(Asn) + AMP + diphosphate + H(+). This is Asparagine--tRNA ligase from Legionella pneumophila (strain Lens).